The primary structure comprises 1004 residues: Hyaluronate lyase HylB (1004 aa).

An N-terminal signal peptide occupies residues 1 to 29; it reads MKNRKIWVMLVGLFTALTNGFMGTTLTFA. Active-site residues include His-468, Tyr-477, and Arg-531.

The protein belongs to the polysaccharide lyase 8 family.

The protein localises to the secreted. It carries out the reaction [hyaluronan](n) = n 3-(4-deoxy-beta-D-gluc-4-enuronosyl)-N-acetyl-D-glucosamine + H2O. The enzyme catalyses Eliminative degradation of polysaccharides containing 1,4-beta-D-hexosaminyl and 1,3-beta-D-glucuronosyl linkages to disaccharides containing 4-deoxy-beta-D-gluc-4-enuronosyl groups.. Functionally, degrades hyaluronic acid (HA) and chondroitin sulfate (CS) A in vitro. Is not active against heparin sodium salt (HS). Involved in the pathogenesis of vancomycin-resistant E.faecalis infections. Contributes to attenuation of the lipopolysaccharide (LPS)-mediated nuclear factor (NF)-kappa-B activation assayed in the mouse RAW-Blue reporter macrophages. In Enterococcus faecalis (strain ATCC 700802 / V583), this protein is Hyaluronate lyase HylB.